The following is an 801-amino-acid chain: Ent-copalyl diphosphate synthase, chloroplastic (801 aa).

A substrate-binding site is contributed by Lys241. Asp373 and Asp375 together coordinate Mg(2+). The DXDD motif motif lies at 373–376; sequence DIDD. Lys459 is a binding site for substrate.

It belongs to the terpene synthase family. Requires Mg(2+) as cofactor.

It is found in the plastid. The protein localises to the chloroplast. It carries out the reaction (2E,6E,10E)-geranylgeranyl diphosphate = ent-copalyl diphosphate. It participates in plant hormone biosynthesis; gibberellin biosynthesis. Its function is as follows. Catalyzes the conversion of geranylgeranyl diphosphate to the gibberellin precursor ent-copalyl diphosphate. In Pisum sativum (Garden pea), this protein is Ent-copalyl diphosphate synthase, chloroplastic.